An 84-amino-acid chain; its full sequence is Cell division topological specificity factor (84 aa).

It belongs to the MinE family.

Prevents the cell division inhibition by proteins MinC and MinD at internal division sites while permitting inhibition at polar sites. This ensures cell division at the proper site by restricting the formation of a division septum at the midpoint of the long axis of the cell. The sequence is that of Cell division topological specificity factor from Burkholderia multivorans (strain ATCC 17616 / 249).